We begin with the raw amino-acid sequence, 1025 residues long: Multidrug resistance protein MdtC (1025 aa).

Helical transmembrane passes span 3–23 (FFALFIYRPVATILIAVAITL), 333–353 (EVEQTLVISIALVILVVFLFL), 360–380 (LIPAVAVPVSLIGTFAAMYLC), 387–407 (LSLMALTIATGFVVDDAIVVL), 431–451 (VGFTVLSMSVSLVAVFLPLLL), 463–483 (FAVTLSVAIGISLVISLTLTP), 528–548 (IVGLVLVGTIALNVWMYITIP), 853–873 (VILILAAIATVYIVLGILYES), 875–895 (VHPLTILSTLPSAGVGALLAL), 897–917 (LFDAPFSLIALIGIMLLIGIV), 953–973 (PIMMTTLAALFGALPLVISSG), and 984–1004 (ITIVGGLAMSQLLTLYTTPVV).

It belongs to the resistance-nodulation-cell division (RND) (TC 2.A.6) family. MdtC subfamily. In terms of assembly, part of a tripartite efflux system composed of MdtA, MdtB and MdtC. MdtC forms a heteromultimer with MdtB.

It localises to the cell inner membrane. In Enterobacter sp. (strain 638), this protein is Multidrug resistance protein MdtC.